Consider the following 156-residue polypeptide: Small ribosomal subunit protein uS7 (156 aa).

Belongs to the universal ribosomal protein uS7 family. As to quaternary structure, part of the 30S ribosomal subunit. Contacts proteins S9 and S11.

Functionally, one of the primary rRNA binding proteins, it binds directly to 16S rRNA where it nucleates assembly of the head domain of the 30S subunit. Is located at the subunit interface close to the decoding center, probably blocks exit of the E-site tRNA. The sequence is that of Small ribosomal subunit protein uS7 from Finegoldia magna (strain ATCC 29328 / DSM 20472 / WAL 2508) (Peptostreptococcus magnus).